The chain runs to 254 residues: Probable 2,4-dienoyl-CoA reductase [(2E)-enoyl-CoA-producing] (254 aa).

Residue 6–38 participates in NADP(+) binding; that stretch reads VIITGGSSGMGKAMAKKQAELGWHVMVTGRNHE. Threonine 100 provides a ligand contact to substrate. The Proton acceptor role is filled by tyrosine 142. Residue lysine 157 participates in NAD(+) binding.

This sequence belongs to the short-chain dehydrogenases/reductases (SDR) family. 2,4-dienoyl-CoA reductase subfamily.

The catalysed reaction is a 4,5-saturated-(2E)-enoyl-CoA + NADP(+) = a (2E,4E)-dienoyl-CoA + NADPH + H(+). It carries out the reaction a (2E,4Z)-dienoyl-CoA + NADPH + H(+) = a 4,5-saturated-(2E)-enoyl-CoA + NADP(+). The protein operates within lipid metabolism; fatty acid beta-oxidation. Auxiliary enzyme of beta-oxidation. It participates in the metabolism of unsaturated fatty enoyl-CoA esters having double bonds in both even- and odd-numbered positions. Catalyzes the NADP-dependent reduction of 2,4-dienoyl-CoA to yield trans-3-enoyl-CoA. This is Probable 2,4-dienoyl-CoA reductase [(2E)-enoyl-CoA-producing] (fadH) from Bacillus subtilis (strain 168).